A 163-amino-acid polypeptide reads, in one-letter code: 18 kDa protein (163 aa).

This Mus musculus (Mouse) protein is 18 kDa protein.